A 342-amino-acid polypeptide reads, in one-letter code: Ribosomal RNA small subunit methyltransferase C (342 aa).

Belongs to the methyltransferase superfamily. RsmC family. As to quaternary structure, monomer.

The protein localises to the cytoplasm. The enzyme catalyses guanosine(1207) in 16S rRNA + S-adenosyl-L-methionine = N(2)-methylguanosine(1207) in 16S rRNA + S-adenosyl-L-homocysteine + H(+). In terms of biological role, specifically methylates the guanine in position 1207 of 16S rRNA in the 30S particle. The polypeptide is Ribosomal RNA small subunit methyltransferase C (Salmonella typhi).